Reading from the N-terminus, the 258-residue chain is Trans-aconitate 2-methyltransferase (258 aa).

Belongs to the methyltransferase superfamily. Tam family.

It is found in the cytoplasm. The catalysed reaction is trans-aconitate + S-adenosyl-L-methionine = (E)-3-(methoxycarbonyl)pent-2-enedioate + S-adenosyl-L-homocysteine. Its function is as follows. Catalyzes the S-adenosylmethionine monomethyl esterification of trans-aconitate. This chain is Trans-aconitate 2-methyltransferase, found in Yersinia pestis bv. Antiqua (strain Antiqua).